A 510-amino-acid polypeptide reads, in one-letter code: Adenosine deaminase 2 (510 aa).

A signal peptide spans M1–S24. Positions R25–N95 are dimerization. 2 residues coordinate Zn(2+): H107 and H109. Position 110 (D110) interacts with substrate. N122 carries an N-linked (GlcNAc...) asparagine glycan. Positions N122–T182 are PRB domain. C132 and C156 are joined by a disulfide. N-linked (GlcNAc...) asparagine glycosylation occurs at N171. Substrate is bound by residues W201–F208, H290, and G323. H353 is a binding site for Zn(2+). Catalysis depends on E356, which acts as the Proton donor. A glycan (N-linked (GlcNAc...) asparagine) is linked at N375. The Proton acceptor role is filled by H381. D438 lines the Zn(2+) pocket. D439 is a binding site for substrate.

This sequence belongs to the metallo-dependent hydrolases superfamily. Adenosine and AMP deaminases family. ADGF subfamily. Homodimer. Interacts with adenosine receptors. Binds heparin. Zn(2+) is required as a cofactor.

It localises to the secreted. The enzyme catalyses adenosine + H2O + H(+) = inosine + NH4(+). Functionally, adenosine deaminase that may contribute to the degradation of extracellular adenosine, a signaling molecule that controls a variety of cellular responses. Requires elevated adenosine levels for optimal enzyme activity. Binds to cell surfaces via proteoglycans and may play a role in the regulation of cell proliferation and differentiation, independently of its enzyme activity. This Sus scrofa (Pig) protein is Adenosine deaminase 2.